Here is a 268-residue protein sequence, read N- to C-terminus: Hydroxyethylthiazole kinase (268 aa).

M45 is a binding site for substrate. Residues R121 and T167 each coordinate ATP. Substrate is bound at residue G194.

The protein belongs to the Thz kinase family. Mg(2+) is required as a cofactor.

It carries out the reaction 5-(2-hydroxyethyl)-4-methylthiazole + ATP = 4-methyl-5-(2-phosphooxyethyl)-thiazole + ADP + H(+). It participates in cofactor biosynthesis; thiamine diphosphate biosynthesis; 4-methyl-5-(2-phosphoethyl)-thiazole from 5-(2-hydroxyethyl)-4-methylthiazole: step 1/1. Catalyzes the phosphorylation of the hydroxyl group of 4-methyl-5-beta-hydroxyethylthiazole (THZ). The chain is Hydroxyethylthiazole kinase from Bacillus cereus (strain Q1).